Here is a 253-residue protein sequence, read N- to C-terminus: Transcription factor ORG2 (253 aa).

The region spanning 71-123 is the bHLH domain; sequence VKKLNHNASERDRRKKINTLFSSLRSCLPASDQSKKLSIPETVSKSLKYIPEL.

Homodimer. Roots.

It is found in the nucleus. In Arabidopsis thaliana (Mouse-ear cress), this protein is Transcription factor ORG2 (ORG2).